Reading from the N-terminus, the 243-residue chain is Probable flavin-dependent thymidylate synthase (243 aa).

Residues 21-239 (FEVDDFEESK…PNTYQDIPDV (219 aa)) enclose the ThyX domain. FAD contacts are provided by residues S80 and 103–105 (RHR). DUMP contacts are provided by residues 100-103 (ELER), 113-115 (SQR), and R178. A ThyX motif motif is present at residues 103 to 113 (RHRHLSFSVVS). Position 194–196 (194–196 (NHR)) interacts with FAD. Residue R205 participates in dUMP binding. R205 (involved in ionization of N3 of dUMP, leading to its activation) is an active-site residue.

Belongs to the thymidylate synthase ThyX family. As to quaternary structure, homotetramer. FAD serves as cofactor.

It carries out the reaction dUMP + (6R)-5,10-methylene-5,6,7,8-tetrahydrofolate + NADPH + H(+) = dTMP + (6S)-5,6,7,8-tetrahydrofolate + NADP(+). The protein operates within pyrimidine metabolism; dTTP biosynthesis. Catalyzes the reductive methylation of 2'-deoxyuridine-5'-monophosphate (dUMP) to 2'-deoxythymidine-5'-monophosphate (dTMP) while utilizing 5,10-methylenetetrahydrofolate (mTHF) as the methyl donor, and NADPH and FADH(2) as the reductant. This chain is Probable flavin-dependent thymidylate synthase (48), found in Mycobacterium phage L5 (Mycobacteriophage L5).